The primary structure comprises 70 residues: MLFFPWWVYLCIVGIIFSAYKLVAAAKEEEKVDQAFIEKEGQIYMERMEKERERRSSQQHEEENQNHSIA.

Residues 3–23 (FFPWWVYLCIVGIIFSAYKLV) traverse the membrane as a helical segment. A disordered region spans residues 48-70 (MEKERERRSSQQHEEENQNHSIA).

Its subcellular location is the cell membrane. In terms of biological role, required for efficient sporulation. The chain is Sporulation protein YhaL (yhaL) from Bacillus subtilis (strain 168).